Reading from the N-terminus, the 356-residue chain is Phosphate acyltransferase (356 aa).

Belongs to the PlsX family. Homodimer. Probably interacts with PlsY.

The protein resides in the cytoplasm. It catalyses the reaction a fatty acyl-[ACP] + phosphate = an acyl phosphate + holo-[ACP]. It functions in the pathway lipid metabolism; phospholipid metabolism. Catalyzes the reversible formation of acyl-phosphate (acyl-PO(4)) from acyl-[acyl-carrier-protein] (acyl-ACP). This enzyme utilizes acyl-ACP as fatty acyl donor, but not acyl-CoA. In Stutzerimonas stutzeri (strain A1501) (Pseudomonas stutzeri), this protein is Phosphate acyltransferase.